A 329-amino-acid polypeptide reads, in one-letter code: R-linalool synthase (329 aa).

Asp-79 is a binding site for Mg(2+). The DDXXD motif signature appears at 79-83 (DDQFD). Arg-172 provides a ligand contact to substrate. Residues Asn-218 and Ser-222 each contribute to the Mg(2+) site. The NXXXSXXXD motif signature appears at 218-226 (NELHSFEKD). Lys-225 lines the substrate pocket. Asp-226 is a Mg(2+) binding site. 308–309 (RY) serves as a coordination point for substrate.

This sequence belongs to the terpene synthase family. Homodimer. Mg(2+) serves as cofactor.

The catalysed reaction is (2E)-geranyl diphosphate + H2O = (R)-linalool + diphosphate. It carries out the reaction (2E,6E)-farnesyl diphosphate + H2O = (6E)-nerolidol + diphosphate. Its function is as follows. In vitro, catalyzes the formation of R-linalool from geranyl diphosphate (GPP). Can also accept farnesyl diphosphate (FPP) as substrate to produce trans-nerolidol. The protein is R-linalool synthase of Streptomyces clavuligerus.